Here is a 650-residue protein sequence, read N- to C-terminus: Acetyl-coenzyme A synthetase (650 aa).

CoA-binding positions include 191 to 194 (RAGR), Thr-311, and Asn-335. ATP-binding positions include 387 to 389 (GEP), 411 to 416 (DTWWQT), Asp-500, and Arg-515. Ser-523 is a binding site for CoA. ATP is bound at residue Arg-526. Residues Val-537, His-539, and Val-542 each contribute to the Mg(2+) site. Arg-584 lines the CoA pocket. Lys-609 is modified (N6-acetyllysine).

The protein belongs to the ATP-dependent AMP-binding enzyme family. Mg(2+) is required as a cofactor. In terms of processing, acetylated. Deacetylation by the SIR2-homolog deacetylase activates the enzyme.

The catalysed reaction is acetate + ATP + CoA = acetyl-CoA + AMP + diphosphate. Its function is as follows. Catalyzes the conversion of acetate into acetyl-CoA (AcCoA), an essential intermediate at the junction of anabolic and catabolic pathways. AcsA undergoes a two-step reaction. In the first half reaction, AcsA combines acetate with ATP to form acetyl-adenylate (AcAMP) intermediate. In the second half reaction, it can then transfer the acetyl group from AcAMP to the sulfhydryl group of CoA, forming the product AcCoA. In Shewanella pealeana (strain ATCC 700345 / ANG-SQ1), this protein is Acetyl-coenzyme A synthetase.